The chain runs to 228 residues: N-(5'-phosphoribosyl)anthranilate isomerase (228 aa).

Belongs to the TrpF family.

It carries out the reaction N-(5-phospho-beta-D-ribosyl)anthranilate = 1-(2-carboxyphenylamino)-1-deoxy-D-ribulose 5-phosphate. It participates in amino-acid biosynthesis; L-tryptophan biosynthesis; L-tryptophan from chorismate: step 3/5. The sequence is that of N-(5'-phosphoribosyl)anthranilate isomerase from Azorhizobium caulinodans (strain ATCC 43989 / DSM 5975 / JCM 20966 / LMG 6465 / NBRC 14845 / NCIMB 13405 / ORS 571).